We begin with the raw amino-acid sequence, 145 residues long: Probable low molecular weight protein-tyrosine-phosphatase EpsP (145 aa).

Residue cysteine 9 is the Nucleophile of the active site. Arginine 15 is an active-site residue. The active-site Proton donor is the aspartate 114.

The protein belongs to the low molecular weight phosphotyrosine protein phosphatase family.

It catalyses the reaction O-phospho-L-tyrosyl-[protein] + H2O = L-tyrosyl-[protein] + phosphate. It participates in glycan metabolism; exopolysaccharide biosynthesis. In terms of biological role, may be involved in assembly or function of the EPS I polymerization/export complex and/or the EpsB ATPase. Alternatively it may function in the removal of the terminal phosphate from C55-isoprenyl pyrophosphate in order to recycle the C55-isoprenyl phosphate lipid carrier used in the synthesis of polysaccharide repeat units. This is Probable low molecular weight protein-tyrosine-phosphatase EpsP (epsP) from Ralstonia solanacearum (Pseudomonas solanacearum).